We begin with the raw amino-acid sequence, 515 residues long: Bifunctional purine biosynthesis protein PurH (515 aa).

Residues 1–145 (MTKRVLISVS…KNHASVTVVV (145 aa)) enclose the MGS-like domain.

It belongs to the PurH family.

The enzyme catalyses (6R)-10-formyltetrahydrofolate + 5-amino-1-(5-phospho-beta-D-ribosyl)imidazole-4-carboxamide = 5-formamido-1-(5-phospho-D-ribosyl)imidazole-4-carboxamide + (6S)-5,6,7,8-tetrahydrofolate. It carries out the reaction IMP + H2O = 5-formamido-1-(5-phospho-D-ribosyl)imidazole-4-carboxamide. It participates in purine metabolism; IMP biosynthesis via de novo pathway; 5-formamido-1-(5-phospho-D-ribosyl)imidazole-4-carboxamide from 5-amino-1-(5-phospho-D-ribosyl)imidazole-4-carboxamide (10-formyl THF route): step 1/1. Its pathway is purine metabolism; IMP biosynthesis via de novo pathway; IMP from 5-formamido-1-(5-phospho-D-ribosyl)imidazole-4-carboxamide: step 1/1. This is Bifunctional purine biosynthesis protein PurH from Streptococcus pneumoniae (strain Taiwan19F-14).